Reading from the N-terminus, the 444-residue chain is Phosphoglucosamine mutase (444 aa).

S102 serves as the catalytic Phosphoserine intermediate. Mg(2+) is bound by residues S102, D241, D243, and D245. At S102 the chain carries Phosphoserine.

Belongs to the phosphohexose mutase family. The cofactor is Mg(2+). Activated by phosphorylation.

The catalysed reaction is alpha-D-glucosamine 1-phosphate = D-glucosamine 6-phosphate. Functionally, catalyzes the conversion of glucosamine-6-phosphate to glucosamine-1-phosphate. This is Phosphoglucosamine mutase from Histophilus somni (strain 2336) (Haemophilus somnus).